We begin with the raw amino-acid sequence, 279 residues long: Energy-coupling factor transporter ATP-binding protein EcfA1 (279 aa).

The ABC transporter domain maps to 6 to 240 (ISVDHLTYQY…GTQLVEMGLD (235 aa)). Residue 40 to 47 (GHNGSGKS) coordinates ATP.

Belongs to the ABC transporter superfamily. Energy-coupling factor EcfA family. Forms a stable energy-coupling factor (ECF) transporter complex composed of 2 membrane-embedded substrate-binding proteins (S component), 2 ATP-binding proteins (A component) and 2 transmembrane proteins (T component).

It is found in the cell membrane. In terms of biological role, ATP-binding (A) component of a common energy-coupling factor (ECF) ABC-transporter complex. Unlike classic ABC transporters this ECF transporter provides the energy necessary to transport a number of different substrates. This is Energy-coupling factor transporter ATP-binding protein EcfA1 from Levilactobacillus brevis (strain ATCC 367 / BCRC 12310 / CIP 105137 / JCM 1170 / LMG 11437 / NCIMB 947 / NCTC 947) (Lactobacillus brevis).